The following is a 363-amino-acid chain: Osmoprotective compounds uptake ATP-binding protein GgtA (363 aa).

One can recognise an ABC transporter domain in the interval 4-234 (VSFEQVTKQF…PANLFVAGFI (231 aa)). 36–43 (GPSGCGKT) lines the ATP pocket.

This sequence belongs to the ABC transporter superfamily. In terms of assembly, the complex is composed of two ATP-binding proteins (GgtA), two transmembrane proteins (GgtC and GgtD) and a solute-binding protein (GgtB).

It localises to the cell membrane. Functionally, part of the ABC transporter complex GgtABCD involved in the uptake of the osmoprotective compounds glucosylglycerol (GG), sucrose and trehalose. Responsible for energy coupling to the transport system. In Synechocystis sp. (strain ATCC 27184 / PCC 6803 / Kazusa), this protein is Osmoprotective compounds uptake ATP-binding protein GgtA.